Reading from the N-terminus, the 363-residue chain is Phospho-N-acetylmuramoyl-pentapeptide-transferase (363 aa).

The next 10 membrane-spanning stretches (helical) occupy residues 3 to 23 (QILFAGVIGLFLTLVGTPLLI), 48 to 68 (GTPTMGGIAFILATVAAYFLA), 83 to 103 (PTFSGLLVLGLMVGMGLVGFL), 121 to 141 (AKMIGQLTVGIAFAVLSLQFA), 159 to 179 (FGWTIGPVLFVVWALFMILAM), 192 to 212 (LATGASVLVFGAYTFIGVWQF), 234 to 254 (PLDLAVVASALMGSCLGFLWW), 261 to 281 (IFMGDTGSLALGGVLAGLAIC), 286 to 306 (LLMAILGGLFVLITMSVVIQV), and 340 to 360 (FWIIQGICVIVGLGLFYAGWA).

Belongs to the glycosyltransferase 4 family. MraY subfamily. Mg(2+) serves as cofactor.

The protein resides in the cell membrane. It carries out the reaction UDP-N-acetyl-alpha-D-muramoyl-L-alanyl-gamma-D-glutamyl-meso-2,6-diaminopimeloyl-D-alanyl-D-alanine + di-trans,octa-cis-undecaprenyl phosphate = di-trans,octa-cis-undecaprenyl diphospho-N-acetyl-alpha-D-muramoyl-L-alanyl-D-glutamyl-meso-2,6-diaminopimeloyl-D-alanyl-D-alanine + UMP. Its pathway is cell wall biogenesis; peptidoglycan biosynthesis. Its function is as follows. Catalyzes the initial step of the lipid cycle reactions in the biosynthesis of the cell wall peptidoglycan: transfers peptidoglycan precursor phospho-MurNAc-pentapeptide from UDP-MurNAc-pentapeptide onto the lipid carrier undecaprenyl phosphate, yielding undecaprenyl-pyrophosphoryl-MurNAc-pentapeptide, known as lipid I. The protein is Phospho-N-acetylmuramoyl-pentapeptide-transferase of Streptomyces coelicolor (strain ATCC BAA-471 / A3(2) / M145).